The chain runs to 832 residues: Ventricular zone-expressed PH domain-containing protein homolog 1 (832 aa).

An interaction with TGFBR1 region spans residues 201–319 (AELLALMSQL…RYLVSQLANM (119 aa)). The segment at 497-519 (DTHGSQLRNSSASHPSIIHSEPE) is disordered. The span at 499–510 (HGSQLRNSSASH) shows a compositional bias: polar residues. Positions 663–832 (ESTFPQQKDL…RESREVTTYL (170 aa)) are interaction with TGFBR1. Residues 716-818 (QPLIEGKLKE…WLQCINVALA (103 aa)) form the PH domain.

It belongs to the MELT/VEPH family. In terms of assembly, interacts with TGFBR1.

The protein localises to the cell membrane. In terms of biological role, interacts with TGF-beta receptor type-1 (TGFBR1) and inhibits dissociation of activated SMAD2 from TGFBR1, impeding its nuclear accumulation and resulting in impaired TGF-beta signaling. May also affect FOXO, Hippo and Wnt signaling. This Rattus norvegicus (Rat) protein is Ventricular zone-expressed PH domain-containing protein homolog 1 (Veph1).